Consider the following 284-residue polypeptide: Acetyl-coenzyme A carboxylase carboxyl transferase subunit beta (284 aa).

In terms of domain architecture, CoA carboxyltransferase N-terminal spans 31–284 (FWTYCKGCDS…LYQILAMHKK (254 aa)). Zn(2+) contacts are provided by C35, C38, C54, and C57. A C4-type zinc finger spans residues 35-57 (CKGCDSHVFRKDIEENSFVCPKC).

It belongs to the AccD/PCCB family. As to quaternary structure, acetyl-CoA carboxylase is a heterohexamer composed of biotin carboxyl carrier protein (AccB), biotin carboxylase (AccC) and two subunits each of ACCase subunit alpha (AccA) and ACCase subunit beta (AccD). It depends on Zn(2+) as a cofactor.

It is found in the cytoplasm. The enzyme catalyses N(6)-carboxybiotinyl-L-lysyl-[protein] + acetyl-CoA = N(6)-biotinyl-L-lysyl-[protein] + malonyl-CoA. Its pathway is lipid metabolism; malonyl-CoA biosynthesis; malonyl-CoA from acetyl-CoA: step 1/1. In terms of biological role, component of the acetyl coenzyme A carboxylase (ACC) complex. Biotin carboxylase (BC) catalyzes the carboxylation of biotin on its carrier protein (BCCP) and then the CO(2) group is transferred by the transcarboxylase to acetyl-CoA to form malonyl-CoA. In Clostridioides difficile (strain 630) (Peptoclostridium difficile), this protein is Acetyl-coenzyme A carboxylase carboxyl transferase subunit beta.